The following is a 451-amino-acid chain: MRECISIHVGQAGVQIGNACWELYCLEHGIQPDGQMPSDKTIGGGDDSFNTFFSETGAGKHVPRAVFVDLEPTVIDEVRTGTYRQLFHPEQLITGKEDAANNYARGHYTIGKEIIDLVLDRIRKLADQCTGLQGFLVFHSFGGGTGSGFTSLLMERLSVDYGKKSKLEFSIYPAPQVSTAVVEPYNSILTTHTTLEHSDCAFMVDNEAIYDICRRNLDIERPTYTNLNRLISQIVSSITASLRFDGALNVDLTEFQTNLVPYPRIHFPLATYAPVISAEKAYHEQLSVAEITNACFEPANQMVKCDPRHGKYMACCLLYRGDVVPKDVNAAIATIKTKRSIQFVDWCPTGFKVGINYQPPTVVPGGDLAKVQRAVCMLSNTTAIAEAWARLDHKFVLMYAKRAFVHWYVGEGMEEGEFSEAREDMAALEKDYEEVGVDSVEGEGEEEGEEY.

The MREC motif motif lies at 1 to 4 (MREC). Positions 10, 11, 12, and 15 each coordinate GTP. N6,N6,N6-trimethyllysine; alternate is present on K40. N6-acetyllysine; alternate is present on K40. S48 carries the phosphoserine modification. E71, A99, S140, G143, G144, T145, G146, T179, E183, N206, Y224, and N228 together coordinate GTP. E71 lines the Mg(2+) pocket. S232 bears the Phosphoserine mark. L252 provides a ligand contact to GTP. The active site involves E254. Y282 carries the 3'-nitrotyrosine modification. A Glycyl lysine isopeptide (Lys-Gly) (interchain with G-Cter in ubiquitin) cross-link involves residue K326. R339 is modified (omega-N-methylarginine). K370 participates in a covalent cross-link: Glycyl lysine isopeptide (Lys-Gly) (interchain with G-Cter in ubiquitin). S439 is subject to Phosphoserine. E443 and E445 each carry 5-glutamyl polyglutamate. Position 451 is a 3'-nitrotyrosine (Y451).

The protein belongs to the tubulin family. In terms of assembly, heterodimer of alpha- and beta-tubulin. A typical microtubule is a hollow water-filled tube with an outer diameter of 25 nm and an inner diameter of 15 nM. Alpha-beta heterodimers associate head-to-tail to form protofilaments running lengthwise along the microtubule wall with the beta-tubulin subunit facing the microtubule plus end conferring a structural polarity. Microtubules usually have 13 protofilaments but different protofilament numbers can be found in some organisms and specialized cells. Interacts with gamma-tubulin; the interaction allows microtubules to nucleate from the gamma-tubulin ring complex (gTuRC). Nascent microtubule interacts (via alpha-tubulin MREC motif) with TTC5/STRAP; this interaction may result in tubulin mRNA-targeted degradation. Component of sperm flagellar doublet microtubules. It depends on Mg(2+) as a cofactor. Post-translationally, some glutamate residues at the C-terminus are polyglycylated, resulting in polyglycine chains on the gamma-carboxyl group. Glycylation is mainly limited to tubulin incorporated into axonemes (cilia and flagella) whereas glutamylation is prevalent in neuronal cells, centrioles, axonemes, and the mitotic spindle. Both modifications can coexist on the same protein on adjacent residues, and lowering polyglycylation levels increases polyglutamylation, and reciprocally. Cilia and flagella glycylation is required for their stability and maintenance. Flagella glycylation controls sperm motility. Some glutamate residues at the C-terminus are polyglutamylated, resulting in polyglutamate chains on the gamma-carboxyl group. Polyglutamylation plays a key role in microtubule severing by spastin (SPAST). SPAST preferentially recognizes and acts on microtubules decorated with short polyglutamate tails: severing activity by SPAST increases as the number of glutamates per tubulin rises from one to eight, but decreases beyond this glutamylation threshold. Glutamylation is also involved in cilia motility. In terms of processing, acetylation of alpha chains at Lys-40 is located inside the microtubule lumen. This modification has been correlated with increased microtubule stability, intracellular transport and ciliary assembly. Post-translationally, methylation of alpha chains at Lys-40 is found in mitotic microtubules and is required for normal mitosis and cytokinesis contributing to genomic stability. Nitration of Tyr-451 is irreversible and interferes with normal dynein intracellular distribution. In terms of processing, undergoes a tyrosination/detyrosination cycle, the cyclic removal and re-addition of a C-terminal tyrosine residue by the enzymes tubulin tyrosine carboxypeptidase (MATCAP1, VASH1 or VASH2) and tubulin tyrosine ligase (TTL), respectively. Post-translationally, tyrosination promotes microtubule interaction with CAP-Gly domain-containing proteins such as CLIP1, CLIP2 and DCTN1. Tyrosination regulates the initiation of dynein-dynactin motility via interaction with DCTN1, which brings the dynein-dynactin complex into contact with microtubules. In neurons, tyrosinated tubulins mediate the initiation of retrograde vesicle transport. Detyrosination is involved in metaphase plate congression by guiding chromosomes during mitosis: detyrosination promotes interaction with CENPE, promoting pole-proximal transport of chromosomes toward the equator. Detyrosination increases microtubules-dependent mechanotransduction in dystrophic cardiac and skeletal muscle. In cardiomyocytes, detyrosinated microtubules are required to resist to contractile compression during contraction: detyrosination promotes association with desmin (DES) at force-generating sarcomeres, leading to buckled microtubules and mechanical resistance to contraction.

It is found in the cytoplasm. Its subcellular location is the cytoskeleton. The catalysed reaction is GTP + H2O = GDP + phosphate + H(+). Its function is as follows. Tubulin is the major constituent of microtubules, protein filaments consisting of alpha- and beta-tubulin heterodimers. Microtubules grow by the addition of GTP-tubulin dimers to the microtubule end, where a stabilizing cap forms. Below the cap, tubulin dimers are in GDP-bound state, owing to GTPase activity of alpha-tubulin. The polypeptide is Tubulin alpha-1B chain (TUBA1B) (Pan troglodytes (Chimpanzee)).